Consider the following 315-residue polypeptide: Cytochrome bo(3) ubiquinol oxidase subunit 2 (315 aa).

An N-terminal signal peptide occupies residues 1-24 (MRLRKYNKSLGWLSLFAGTVLLSG). The N-palmitoyl cysteine moiety is linked to residue C25. A lipid anchor (S-diacylglycerol cysteine) is attached at C25. Residues 25–50 (CNSALLDPKGQIGLEQRSLILTAFGL) are Periplasmic-facing. The helical transmembrane segment at 51-68 (MLIVVIPAILMAVGFAWK) threads the bilayer. Over 69 to 92 (YRASNKDAKYSPNWSHSNKVEAVV) the chain is Cytoplasmic. A helical transmembrane segment spans residues 93–111 (WTVPILIIIFLAVLTWKTT). Residues 112–315 (HALEPSKPLA…MDMSHAESAH (204 aa)) lie on the Periplasmic side of the membrane. The tract at residues 288-315 (MDMTQPEGEHSAHEGMEGMDMSHAESAH) is disordered. The segment covering 294-315 (EGEHSAHEGMEGMDMSHAESAH) has biased composition (basic and acidic residues).

It belongs to the cytochrome c oxidase subunit 2 family. As to quaternary structure, heterooctamer of two A chains, two B chains, two C chains and two D chains.

The protein localises to the cell inner membrane. Functionally, cytochrome bo(3) ubiquinol terminal oxidase is the component of the aerobic respiratory chain of E.coli that predominates when cells are grown at high aeration. Has proton pump activity across the membrane in addition to electron transfer, pumping 2 protons/electron. In Escherichia coli O6:H1 (strain CFT073 / ATCC 700928 / UPEC), this protein is Cytochrome bo(3) ubiquinol oxidase subunit 2 (cyoA).